A 254-amino-acid polypeptide reads, in one-letter code: NAD kinase (254 aa).

The active-site Proton acceptor is Asp-44. NAD(+) is bound by residues Asp-44–Gly-45, Asn-114–Glu-115, Asp-144, Ala-152, Thr-155–Ser-160, and Ala-179.

This sequence belongs to the NAD kinase family. A divalent metal cation is required as a cofactor.

It is found in the cytoplasm. The catalysed reaction is NAD(+) + ATP = ADP + NADP(+) + H(+). Involved in the regulation of the intracellular balance of NAD and NADP, and is a key enzyme in the biosynthesis of NADP. Catalyzes specifically the phosphorylation on 2'-hydroxyl of the adenosine moiety of NAD to yield NADP. The protein is NAD kinase of Cereibacter sphaeroides (strain ATCC 17029 / ATH 2.4.9) (Rhodobacter sphaeroides).